We begin with the raw amino-acid sequence, 373 residues long: Flagellar P-ring protein (373 aa).

A signal peptide spans 1 to 30 (MTNRWSFDVNKNLVTVLFTWLCLSISTAHA).

This sequence belongs to the FlgI family. In terms of assembly, the basal body constitutes a major portion of the flagellar organelle and consists of four rings (L,P,S, and M) mounted on a central rod.

The protein resides in the periplasm. It is found in the bacterial flagellum basal body. Functionally, assembles around the rod to form the L-ring and probably protects the motor/basal body from shearing forces during rotation. In Aliivibrio fischeri (strain ATCC 700601 / ES114) (Vibrio fischeri), this protein is Flagellar P-ring protein.